Here is a 286-residue protein sequence, read N- to C-terminus: MSKLTSIEENIEIKRRLWNGSISLKIIISIVGESSEDGITNEYEYLTEGYRNAYLPTLYPNIVSYIKKLPTVAFSNNSPIWLEYEGVPLRWNLPIGVLYDHLYLPAKFTNQSTPWTLDLKIASSTLPYPSNYIVPFTYSAEDGSVNYTKSINEMLLNQLKQSCYVLNGTAKPIMQLNGPETELLCNLVITRNLKTYNFFNNKIIKQIRGIPVRIYLPNTQLVAQAAVDPHILLQDLLLERIPTLMEVSVPIIHGIDAGPLLKFQLNDIWHQFKHPDNVLYISILMP.

Lys160 participates in a covalent cross-link: Glycyl lysine isopeptide (Lys-Gly) (interchain with G-Cter in ATG12).

The protein belongs to the ATG5 family. In terms of assembly, conjugated with ATG12. Conjugated to ATG12; which is essential for autophagy.

Its subcellular location is the preautophagosomal structure membrane. Its function is as follows. Involved in cytoplasm to vacuole transport (Cvt) and autophagic vesicle formation. Autophagy is essential for maintenance of amino acid levels and protein synthesis under nitrogen starvation. Required for selective autophagic degradation of the nucleus (nucleophagy). Also required for mitophagy, which eliminates defective or superfluous mitochondria in order to fulfill cellular energy requirements and prevent excess ROS production. Conjugation with ATG12, through a ubiquitin-like conjugating system involving ATG7 as an E1-like activating enzyme and ATG10 as an E2-like conjugating enzyme, is essential for its function. The ATG12-ATG5 conjugate acts as an E3-like enzyme which is required for lipidation of ATG8 and ATG8 association to the vesicle membranes. The chain is Autophagy protein 5 (ATG5) from Lodderomyces elongisporus (strain ATCC 11503 / CBS 2605 / JCM 1781 / NBRC 1676 / NRRL YB-4239) (Yeast).